Reading from the N-terminus, the 87-residue chain is UPF0367 protein SynRCC307_0258 (87 aa).

It belongs to the UPF0367 family.

The protein is UPF0367 protein SynRCC307_0258 of Synechococcus sp. (strain RCC307).